Here is a 363-residue protein sequence, read N- to C-terminus: Protein RecA (363 aa).

78–85 contributes to the ATP binding site; the sequence is GPESGGKT.

This sequence belongs to the RecA family.

Its subcellular location is the cytoplasm. Its function is as follows. Can catalyze the hydrolysis of ATP in the presence of single-stranded DNA, the ATP-dependent uptake of single-stranded DNA by duplex DNA, and the ATP-dependent hybridization of homologous single-stranded DNAs. It interacts with LexA causing its activation and leading to its autocatalytic cleavage. Probably involved in base excision repair. In terms of biological role, following severe irradiation (7 kGy of gamma irradiation) genomic DNA is fragmented. DNA is progressively degraded for the first 1.5 hours after IR, in a step promoted by RecA and counterbalanced by DNA Pol I and Pol III, followed by massive DNA synthesis and genome reassembly in the next hour. Optimal priming of DNA synthesis requires both RecA and RadA, Pol III initiates DNA synthesis while both Pol I and Pol III are required for its continuation. In the absence of RecA the majority of the chromosome is still reconstituted, via either single-strand annealing or non-homologous end joining. This Deinococcus radiodurans (strain ATCC 13939 / DSM 20539 / JCM 16871 / CCUG 27074 / LMG 4051 / NBRC 15346 / NCIMB 9279 / VKM B-1422 / R1) protein is Protein RecA.